The following is a 235-amino-acid chain: Hydroxyacylglutathione hydrolase (235 aa).

H53, H55, D57, H58, H109, D127, and H165 together coordinate Zn(2+).

Belongs to the metallo-beta-lactamase superfamily. Glyoxalase II family. Monomer. The cofactor is Zn(2+).

The enzyme catalyses an S-(2-hydroxyacyl)glutathione + H2O = a 2-hydroxy carboxylate + glutathione + H(+). It participates in secondary metabolite metabolism; methylglyoxal degradation; (R)-lactate from methylglyoxal: step 2/2. In terms of biological role, thiolesterase that catalyzes the hydrolysis of S-D-lactoyl-glutathione to form glutathione and D-lactic acid. The protein is Hydroxyacylglutathione hydrolase of Glaesserella parasuis serovar 5 (strain SH0165) (Haemophilus parasuis).